A 369-amino-acid chain; its full sequence is MALTLEALVKRFGGEIVGDAQCTVSGLAPLDQAGPQQLAFLANPKYLSQVETSGAGAVLIAPKDLEKLGAAEGSLTSGPRTAGPSNFIVTANPYAYFARVAQMFIDLATPPRAAGVHPSATIDPSAQVAASAVIGPHVTIEAGAVIADDVQLDAGVFVGRGTTIGAGSHLYPNAAVYHGCKIGPRAIIHAGAVIGSDGFGFAPDFVGDGDARTGSWVKIPQVGGVSIGPDVEIGANTTIDRGAMADTVIEACVKIDNQVQIGHNCRIGAYTVIAGSAGIAGSTTIGRHCMIGGAAGIAGHVTLGDYVIITAKSGVSKSLPKAGIYTSAFPAVDHGEWNRSAALVRNLDKLRDRIKALETALAAQGGTDA.

The Proton acceptor role is filled by H263.

This sequence belongs to the transferase hexapeptide repeat family. LpxD subfamily. As to quaternary structure, homotrimer.

The enzyme catalyses a UDP-3-O-[(3R)-3-hydroxyacyl]-alpha-D-glucosamine + a (3R)-hydroxyacyl-[ACP] = a UDP-2-N,3-O-bis[(3R)-3-hydroxyacyl]-alpha-D-glucosamine + holo-[ACP] + H(+). The protein operates within bacterial outer membrane biogenesis; LPS lipid A biosynthesis. Its function is as follows. Catalyzes the N-acylation of UDP-3-O-acylglucosamine using 3-hydroxyacyl-ACP as the acyl donor. Is involved in the biosynthesis of lipid A, a phosphorylated glycolipid that anchors the lipopolysaccharide to the outer membrane of the cell. This is UDP-3-O-acylglucosamine N-acyltransferase from Burkholderia vietnamiensis (strain G4 / LMG 22486) (Burkholderia cepacia (strain R1808)).